Reading from the N-terminus, the 208-residue chain is ATP-dependent Clp protease proteolytic subunit (208 aa).

The Nucleophile role is filled by Ser-107. The active site involves His-132.

Belongs to the peptidase S14 family. In terms of assembly, fourteen ClpP subunits assemble into 2 heptameric rings which stack back to back to give a disk-like structure with a central cavity, resembling the structure of eukaryotic proteasomes.

The protein localises to the cytoplasm. The catalysed reaction is Hydrolysis of proteins to small peptides in the presence of ATP and magnesium. alpha-casein is the usual test substrate. In the absence of ATP, only oligopeptides shorter than five residues are hydrolyzed (such as succinyl-Leu-Tyr-|-NHMec, and Leu-Tyr-Leu-|-Tyr-Trp, in which cleavage of the -Tyr-|-Leu- and -Tyr-|-Trp bonds also occurs).. Its function is as follows. Cleaves peptides in various proteins in a process that requires ATP hydrolysis. Has a chymotrypsin-like activity. Plays a major role in the degradation of misfolded proteins. This chain is ATP-dependent Clp protease proteolytic subunit, found in Methylobacterium radiotolerans (strain ATCC 27329 / DSM 1819 / JCM 2831 / NBRC 15690 / NCIMB 10815 / 0-1).